An 882-amino-acid polypeptide reads, in one-letter code: Probable LRR receptor-like serine/threonine-protein kinase At1g12460 (882 aa).

A signal peptide spans 1–21 (MRKVHLFLVLVHFIYISTSRS). Residues 22 to 515 (DSISERDILL…SRNSDALSIS (494 aa)) are Extracellular-facing. An N-linked (GlcNAc...) asparagine glycan is attached at Asn76. 16 LRR repeats span residues 92–113 (FIRVLNLFGNRFTGNLPLDYFK), 116–138 (TLWTINVSSNALSGPIPEFISEL), 140–162 (SLRFLDLSKNGFTGEIPVSLFKF), 165–187 (KTKFVSLAHNNIFGSIPASIVNC), 189–210 (NLVGFDFSYNNLKGVLPPRICD), 213–235 (VLEYISVRNNLLSGDVSEEIQKC), 237–258 (RLILVDLGSNLFHGLAPFAVLT), 261–283 (NITYFNVSWNRFGGEIGEIVDCS), 285–308 (SLEFLDASSNELTGRIPTGVMGCK), 309–331 (SLKLLDLESNKLNGSIPGSIGKM), 333–355 (SLSVIRLGNNSIDGVIPRDIGSL), 357–379 (FLQVLNLHNLNLIGEVPEDISNC), 381–404 (VLLELDVSGNDLEGKISKKLLNLT), 405–427 (NIKILDLHRNRLNGSIPPELGNL), 429–451 (KVQFLDLSQNSLSGPIPSSLGSL), and 453–475 (TLTHFNVSYNNLSGVIPPVPMIQ). A glycan (N-linked (GlcNAc...) asparagine) is linked at Asn121. Residues Asn261 and Asn266 are each glycosylated (N-linked (GlcNAc...) asparagine). N-linked (GlcNAc...) asparagine glycosylation is found at Asn321 and Asn341. 3 N-linked (GlcNAc...) asparagine glycosylation sites follow: Asn402, Asn417, and Asn426. Asn458 and Asn463 each carry an N-linked (GlcNAc...) asparagine glycan. Residues 516–536 (VIIVIIAAAVILFGVCIVLAL) traverse the membrane as a helical segment. At 537-882 (NLRARKRRKD…LESIRNGFGS (346 aa)) the chain is on the cytoplasmic side. A Phosphothreonine modification is found at Thr589. In terms of domain architecture, Protein kinase spans 593-876 (LDKENIIGMG…AEVVQVLESI (284 aa)). ATP contacts are provided by residues 599-607 (IGMGSIGSV) and Lys621. Residue Tyr770 is modified to Phosphotyrosine.

This sequence belongs to the protein kinase superfamily. Ser/Thr protein kinase family.

It localises to the cell membrane. The enzyme catalyses L-seryl-[protein] + ATP = O-phospho-L-seryl-[protein] + ADP + H(+). It catalyses the reaction L-threonyl-[protein] + ATP = O-phospho-L-threonyl-[protein] + ADP + H(+). This is Probable LRR receptor-like serine/threonine-protein kinase At1g12460 from Arabidopsis thaliana (Mouse-ear cress).